The primary structure comprises 483 residues: Glutamyl-tRNA(Gln) amidotransferase subunit A (483 aa).

Residues lysine 76 and serine 151 each act as charge relay system in the active site. The active-site Acyl-ester intermediate is serine 175.

It belongs to the amidase family. GatA subfamily. In terms of assembly, heterotrimer of A, B and C subunits.

It catalyses the reaction L-glutamyl-tRNA(Gln) + L-glutamine + ATP + H2O = L-glutaminyl-tRNA(Gln) + L-glutamate + ADP + phosphate + H(+). Allows the formation of correctly charged Gln-tRNA(Gln) through the transamidation of misacylated Glu-tRNA(Gln) in organisms which lack glutaminyl-tRNA synthetase. The reaction takes place in the presence of glutamine and ATP through an activated gamma-phospho-Glu-tRNA(Gln). The chain is Glutamyl-tRNA(Gln) amidotransferase subunit A from Pseudomonas putida (strain ATCC 700007 / DSM 6899 / JCM 31910 / BCRC 17059 / LMG 24140 / F1).